The chain runs to 561 residues: Urocanate hydratase (561 aa).

Residues 52-53 (GG), Q130, 176-178 (GMG), E196, R201, 242-243 (NA), 263-267 (QTSAH), 273-274 (YL), and Y322 each bind NAD(+). C410 is an active-site residue. Position 492 (G492) interacts with NAD(+).

The protein belongs to the urocanase family. NAD(+) serves as cofactor.

The protein resides in the cytoplasm. It carries out the reaction 4-imidazolone-5-propanoate = trans-urocanate + H2O. Its pathway is amino-acid degradation; L-histidine degradation into L-glutamate; N-formimidoyl-L-glutamate from L-histidine: step 2/3. Catalyzes the conversion of urocanate to 4-imidazolone-5-propionate. This is Urocanate hydratase from Enterobacter sp. (strain 638).